The chain runs to 219 residues: Deoxyribose-phosphate aldolase (219 aa).

Aspartate 89 (proton donor/acceptor) is an active-site residue. Residue lysine 151 is the Schiff-base intermediate with acetaldehyde of the active site. Catalysis depends on lysine 180, which acts as the Proton donor/acceptor.

It belongs to the DeoC/FbaB aldolase family. DeoC type 1 subfamily.

It localises to the cytoplasm. It carries out the reaction 2-deoxy-D-ribose 5-phosphate = D-glyceraldehyde 3-phosphate + acetaldehyde. It participates in carbohydrate degradation; 2-deoxy-D-ribose 1-phosphate degradation; D-glyceraldehyde 3-phosphate and acetaldehyde from 2-deoxy-alpha-D-ribose 1-phosphate: step 2/2. In terms of biological role, catalyzes a reversible aldol reaction between acetaldehyde and D-glyceraldehyde 3-phosphate to generate 2-deoxy-D-ribose 5-phosphate. The sequence is that of Deoxyribose-phosphate aldolase from Coprothermobacter proteolyticus (strain ATCC 35245 / DSM 5265 / OCM 4 / BT).